Here is a 1453-residue protein sequence, read N- to C-terminus: NK-tumor recognition protein (1453 aa).

The PPIase cyclophilin-type domain maps to 10-175 (HFDIEINREP…ADVRVIDCGV (166 aa)). The segment at 187 to 625 (KKRKKPTCSE…RWKPGQKPWK (439 aa)) is disordered. Over residues 195 to 213 (SEGSDSSSRSSSSSESSSE) the composition is skewed to low complexity. Residues 221–240 (IRRRRHKRRPKVRHAKKRRK) show a composition bias toward basic residues. A compositionally biased stretch (basic and acidic residues) spans 259 to 286 (YSERSDVNEKRSVDSNTKREKPVVRPEE). Lys-323 is covalently cross-linked (Glycyl lysine isopeptide (Lys-Gly) (interchain with G-Cter in SUMO2)). Over residues 329-348 (SGRKIKGRGTIRYHTPPRSR) the composition is skewed to basic residues. A phosphoserine mark is found at Ser-379, Ser-401, and Ser-416. A compositionally biased stretch (basic and acidic residues) spans 382-402 (KWSKGDKLSDPCSSRWDERSL). The span at 403–421 (SQRSRSWSYNGYYSDLSTA) shows a compositional bias: polar residues. The segment covering 425-460 (DGHHKKHRKEKKFKHKKKAKKQKHCRRHRQTKKRRI) has biased composition (basic residues). Residues 514-531 (SSRDSYRSKSHSRSDSRG) are compositionally biased toward basic and acidic residues. Composition is skewed to low complexity over residues 532–546 (SSRS…SRSL) and 554–565 (SSRSGPRRTSIS). Residues Lys-576 and Lys-579 each participate in a glycyl lysine isopeptide (Lys-Gly) (interchain with G-Cter in SUMO2) cross-link. Ser-611 carries the phosphoserine modification. Residue Lys-637 forms a Glycyl lysine isopeptide (Lys-Gly) (interchain with G-Cter in SUMO2) linkage. At Ser-646 the chain carries Phosphoserine. Residues 651–661 (TNIKATVSSSS) show a composition bias toward polar residues. Residues 651 to 1453 (TNIKATVSSS…RSPSESSRYS (803 aa)) form a disordered region. Residues Lys-654 and Lys-664 each participate in a glycyl lysine isopeptide (Lys-Gly) (interchain with G-Cter in SUMO2) cross-link. Composition is skewed to low complexity over residues 682 to 726 (RSSG…SSRS) and 736 to 749 (SQHS…SVSS). Positions 755 to 772 (AMFRSNRKKSVTSHKRHR) are enriched in basic residues. The span at 773 to 789 (SNSEKTLHSKYVRGREK) shows a compositional bias: basic and acidic residues. A compositionally biased stretch (low complexity) spans 799–809 (SRSSLDYSSDS). Composition is skewed to basic and acidic residues over residues 820–852 (PEKE…ECPR) and 859–868 (KDHSRDDSVS). Ser-880, Ser-882, Ser-884, and Ser-900 each carry phosphoserine. The span at 887-902 (DVTKSRKSDPRRGSEK) shows a compositional bias: basic and acidic residues. A compositionally biased stretch (acidic residues) spans 903 to 913 (EEGEASSDSES). Low complexity predominate over residues 948–958 (SSASESESSCS). Basic and acidic residues predominate over residues 966–982 (EPQKQKHSKDDLKGDHT). Positions 983–1005 (KRAREKSKAKKDKKHKAPKRKQA) are enriched in basic residues. The span at 1030-1045 (DPKEKRHVSEKCEAVK) shows a compositional bias: basic and acidic residues. Residues Ser-1139 and Ser-1148 each carry the phosphoserine modification. Over residues 1170-1180 (QESSMSESKTL) the composition is skewed to polar residues. Residues 1189–1199 (SSTSVTSPVET) show a composition bias toward low complexity. At Ser-1195 the chain carries Phosphoserine. Glycyl lysine isopeptide (Lys-Gly) (interchain with G-Cter in SUMO2) cross-links involve residues Lys-1208 and Lys-1249. The segment at 1303–1453 (RSPHRSRSKS…RSPSESSRYS (151 aa)) is arg/Ser tandem repeat-rich. A compositionally biased stretch (low complexity) spans 1322–1346 (SVSYSHSRSRSRSSTSSYRSRSYSR). The span at 1369 to 1379 (HSHRTSSRSRS) shows a compositional bias: basic residues. Residues 1380–1401 (RSSSYDLHSRSRSYTYDSYYSR) are compositionally biased toward low complexity. A compositionally biased stretch (basic residues) spans 1416 to 1426 (RGRSYNRRSRS).

The protein resides in the cell membrane. The enzyme catalyses [protein]-peptidylproline (omega=180) = [protein]-peptidylproline (omega=0). Its activity is regulated as follows. Inhibited by cyclosporin A (CsA). Its function is as follows. PPIase that catalyzes the cis-trans isomerization of proline imidic peptide bonds in oligopeptides and may therefore assist protein folding. Component of a putative tumor-recognition complex involved in the function of NK cells. The chain is NK-tumor recognition protein from Mus musculus (Mouse).